The sequence spans 407 residues: Protein phosphatase methylesterase 1 (407 aa).

Residues M1–P53 are disordered. Residues S185, D211, and H342 contribute to the active site. Residues G388–T401 show a composition bias toward gly residues. Positions G388–S407 are disordered.

It belongs to the AB hydrolase superfamily.

It carries out the reaction [phosphatase 2A protein]-C-terminal L-leucine methyl ester + H2O = [phosphatase 2A protein]-C-terminal L-leucine + methanol + H(+). In terms of biological role, demethylates proteins that have been reversibly carboxymethylated. Demethylates the phosphatase PP2A catalytic subunit. This chain is Protein phosphatase methylesterase 1 (ppe1), found in Emericella nidulans (strain FGSC A4 / ATCC 38163 / CBS 112.46 / NRRL 194 / M139) (Aspergillus nidulans).